Consider the following 92-residue polypeptide: Small ribosomal subunit protein uS19c (92 aa).

Belongs to the universal ribosomal protein uS19 family.

Its subcellular location is the plastid. It is found in the chloroplast. Functionally, protein S19 forms a complex with S13 that binds strongly to the 16S ribosomal RNA. This is Small ribosomal subunit protein uS19c (rps19) from Picea abies (Norway spruce).